We begin with the raw amino-acid sequence, 761 residues long: Phosphoribosylformylglycinamidine synthase subunit PurL (761 aa).

The segment covering 1–13 (MTSRVDTVDNAAS) has biased composition (polar residues). The interval 1 to 23 (MTSRVDTVDNAASTPDHPQPFAE) is disordered. His57 is a catalytic residue. ATP is bound by residues Tyr60 and Lys104. Residue Glu106 participates in Mg(2+) binding. Residues 107 to 110 (SHNH) and Arg129 each bind substrate. The active-site Proton acceptor is the His108. Residue Asp130 participates in Mg(2+) binding. Gln259 contributes to the substrate binding site. A Mg(2+)-binding site is contributed by Asp287. 331 to 333 (ESQ) provides a ligand contact to substrate. ATP is bound by residues Asn519 and Gly556. A Mg(2+)-binding site is contributed by Asn557. Ser559 contributes to the substrate binding site.

This sequence belongs to the FGAMS family. As to quaternary structure, monomer. Part of the FGAM synthase complex composed of 1 PurL, 1 PurQ and 2 PurS subunits.

Its subcellular location is the cytoplasm. It catalyses the reaction N(2)-formyl-N(1)-(5-phospho-beta-D-ribosyl)glycinamide + L-glutamine + ATP + H2O = 2-formamido-N(1)-(5-O-phospho-beta-D-ribosyl)acetamidine + L-glutamate + ADP + phosphate + H(+). The protein operates within purine metabolism; IMP biosynthesis via de novo pathway; 5-amino-1-(5-phospho-D-ribosyl)imidazole from N(2)-formyl-N(1)-(5-phospho-D-ribosyl)glycinamide: step 1/2. Functionally, part of the phosphoribosylformylglycinamidine synthase complex involved in the purines biosynthetic pathway. Catalyzes the ATP-dependent conversion of formylglycinamide ribonucleotide (FGAR) and glutamine to yield formylglycinamidine ribonucleotide (FGAM) and glutamate. The FGAM synthase complex is composed of three subunits. PurQ produces an ammonia molecule by converting glutamine to glutamate. PurL transfers the ammonia molecule to FGAR to form FGAM in an ATP-dependent manner. PurS interacts with PurQ and PurL and is thought to assist in the transfer of the ammonia molecule from PurQ to PurL. This chain is Phosphoribosylformylglycinamidine synthase subunit PurL, found in Mycobacteroides abscessus (strain ATCC 19977 / DSM 44196 / CCUG 20993 / CIP 104536 / JCM 13569 / NCTC 13031 / TMC 1543 / L948) (Mycobacterium abscessus).